The chain runs to 397 residues: 4-hydroxybenzoate polyprenyltransferase, mitochondrial (397 aa).

The transit peptide at 1-14 directs the protein to the mitochondrion; that stretch reads MFAVRHLLKSRKHF. Helical transmembrane passes span 96–116, 121–141, 169–189, 190–210, 213–233, 242–262, 289–309, 313–333, and 345–365; these read IGTY…ADAG, LTML…GCTI, FDAI…LVQL, NWQS…YPLM, VTYW…LLGW, LAAC…YDTI, VWLS…GWAC, LPYY…IYSL, and FLSN…GTLL.

This sequence belongs to the UbiA prenyltransferase family. Requires Mg(2+) as cofactor.

The protein resides in the mitochondrion inner membrane. The enzyme catalyses an all-trans-polyprenyl diphosphate + 4-hydroxybenzoate = a 4-hydroxy-3-(all-trans-polyprenyl)benzoate + diphosphate. It functions in the pathway cofactor biosynthesis; ubiquinone biosynthesis. In terms of biological role, catalyzes the prenylation of para-hydroxybenzoate (PHB) with an all-trans polyprenyl group. Mediates the second step in the final reaction sequence of coenzyme Q (CoQ) biosynthesis, which is the condensation of the polyisoprenoid side chain with PHB, generating the first membrane-bound Q intermediate. The protein is 4-hydroxybenzoate polyprenyltransferase, mitochondrial of Drosophila pseudoobscura pseudoobscura (Fruit fly).